The primary structure comprises 261 residues: Kallikrein-1E2 (261 aa).

An N-terminal signal peptide occupies residues 1 to 17; the sequence is MWFLVLCLDLSLGETGA. Residues 18-24 constitute a propeptide, activation peptide; sequence LPPIQSR. In terms of domain architecture, Peptidase S1 spans 25–258; sequence IIGGWECEKH…HLKWIKETIE (234 aa). 5 disulfide bridges follow: Cys-31–Cys-173, Cys-50–Cys-66, Cys-152–Cys-219, Cys-184–Cys-198, and Cys-209–Cys-234. The active-site Charge relay system is the His-65. Asn-79 carries an N-linked (GlcNAc...) asparagine glycan. Asp-120 (charge relay system) is an active-site residue. Residue Ser-213 is the Charge relay system of the active site.

This sequence belongs to the peptidase S1 family. Kallikrein subfamily. In terms of tissue distribution, detected in prostate and semen.

It is found in the secreted. It catalyses the reaction Preferential cleavage of Arg-|-Xaa bonds in small molecule substrates. Highly selective action to release kallidin (lysyl-bradykinin) from kininogen involves hydrolysis of Met-|-Xaa or Leu-|-Xaa.. Its function is as follows. Glandular kallikreins cleave Met-Lys and Arg-Ser bonds in kininogen to release Lys-bradykinin. The sequence is that of Kallikrein-1E2 (KLK1E2) from Equus caballus (Horse).